We begin with the raw amino-acid sequence, 638 residues long: Trichohyalin-like protein 1 (638 aa).

Residues 49 to 84 form the EF-hand domain; sequence HVFHAVERKLNLLNFDRDGTISFEEFVLAIFSLLNP. Positions 134-638 are disordered; it reads SEMASSGQPS…ALEAESLEAQ (505 aa). The segment covering 166-179 has biased composition (polar residues); that stretch reads LPRNVSEPNDPENQ. Basic and acidic residues-rich tracts occupy residues 221-246, 294-309, and 318-328; these read IPRE…QRPT, DDTK…KDAG, and EEPKADAKVAE. Residues 343–357 show a composition bias toward polar residues; sequence DQSVQSRSRNVSETS. 6 stretches are compositionally biased toward basic and acidic residues: residues 358–372, 395–409, 419–435, 479–490, 526–548, and 622–631; these read SRGE…HERI, REND…KDPS, EIKE…HSEE, RIQDKPVRKEDH, AEPH…KQES, and AGRENRKALE.

The protein belongs to the S-100 family.

The protein is Trichohyalin-like protein 1 (Tchhl1) of Mus musculus (Mouse).